The following is a 503-amino-acid chain: Arabinose import ATP-binding protein AraG 1 (503 aa).

ABC transporter domains lie at Leu-5–Arg-240 and Arg-251–Thr-497. Gly-37 to Ser-44 serves as a coordination point for ATP.

This sequence belongs to the ABC transporter superfamily. Arabinose importer (TC 3.A.1.2.2) family. In terms of assembly, the complex is composed of two ATP-binding proteins (AraG), two transmembrane proteins (AraH) and a solute-binding protein (AraF).

It is found in the cell inner membrane. It carries out the reaction L-arabinose(out) + ATP + H2O = L-arabinose(in) + ADP + phosphate + H(+). In terms of biological role, part of the ABC transporter complex AraFGH involved in arabinose import. Responsible for energy coupling to the transport system. This chain is Arabinose import ATP-binding protein AraG 1, found in Burkholderia ambifaria (strain ATCC BAA-244 / DSM 16087 / CCUG 44356 / LMG 19182 / AMMD) (Burkholderia cepacia (strain AMMD)).